Reading from the N-terminus, the 361-residue chain is Biotin synthase (361 aa).

A Radical SAM core domain is found at 63–290 (NTVQLSTLLS…RAMVRLSAGR (228 aa)). Positions 78, 82, and 85 each coordinate [4Fe-4S] cluster. [2Fe-2S] cluster contacts are provided by C122, C153, C213, and R285.

Belongs to the radical SAM superfamily. Biotin synthase family. As to quaternary structure, homodimer. It depends on [4Fe-4S] cluster as a cofactor. Requires [2Fe-2S] cluster as cofactor.

The catalysed reaction is (4R,5S)-dethiobiotin + (sulfur carrier)-SH + 2 reduced [2Fe-2S]-[ferredoxin] + 2 S-adenosyl-L-methionine = (sulfur carrier)-H + biotin + 2 5'-deoxyadenosine + 2 L-methionine + 2 oxidized [2Fe-2S]-[ferredoxin]. It functions in the pathway cofactor biosynthesis; biotin biosynthesis; biotin from 7,8-diaminononanoate: step 2/2. Catalyzes the conversion of dethiobiotin (DTB) to biotin by the insertion of a sulfur atom into dethiobiotin via a radical-based mechanism. The protein is Biotin synthase of Paraburkholderia phytofirmans (strain DSM 17436 / LMG 22146 / PsJN) (Burkholderia phytofirmans).